Here is a 1228-residue protein sequence, read N- to C-terminus: MDQDKVAFLLELEDKLAKIRSQVNSKLENQKHIAIILTAVEENIAGQATNDVSKNIVNYIISFMSLLDQAVDPSTHEIKDIQLASSSTYLLDLIFHYSPKVLLRSKFSEILTKIAPCITAEKANAPLIRAAIGCLESLLIAQDAQAWNNTYDLNVTPKRGLQGILELSLDVRPKVRKRALDAVHAVLLNPPVAPTAEHVAAVFVADFCDKQLAGILNDLSNLSNKQLKAQKTKEDINASVMRSLRLITSVVSTGQWPSSQIEPLCDVLLGVTKSSEQYLVSASFECFESMFKTMAETTISSGLAENKYLRVLDTIFALKPSNVDTLLTKSWIAVVIKGMSTYATHQPLKALRKIPGVFHIMCTYLASETPEVYQAASQCLISILSESVKDDLLLYTPSVDEKVFKNVDEIISQIAKTFIDFLSIRYSHCSREILKILVAAFNKFRYRSNPHFLKSLKIVDTWRVNEEQFMDLRNEIELVIGASISAMGPEMILAEAPLNLDNPSSERPGRAWLLPLIRDYTKNANLATFQNELAPYIKSFQSKFDKVPEESIQLRVFQTIVDQIWSTLPRFCELPMDLRESFTDEFASELSSLLYSEVELRTTICHALKVLAESNVSYAEESSSHNVLLLQRFPISEAQKNIEYLSTKSTNLLAVLFNVYTQTTPNARSYILETIDQYLKITSKEDLEKTFNNVCGLLKNSMNEESSGNVNKEKKKPQLTATLLDLIICMITYLPVSSYSALFSMFSLTVNSADALIQKRAYRIITKLSELKSGSTAVAQFISDIENVMVDSASSVQTSAKAARLTAIKTIVELLPLDHLDFIVRTVAEVILSTKDVNEKSRETAFDTLICMGRKMNEPNGIIKLFQIPGYDPTTPDQSSSISEFFKIISAGLIGESQHMVSSSITGYACLVFEFKNELDSGILMDIYDTIELYLTSNSREIVKSAIGFTKVCVLGLPEELMRPKVPELLLKLLRWSHEHTGHFKAKVKHIIERLIRRFGYDYIEANFPEEDRRLLTNIRKMRNRNKRKDEEVTTGVSDVAATKGSRFMSAFDEAVYGSDEENDNGSDQEENVAGGKMKNGAKQFIVESGDNPLDLLDSQTLAHISSTRPKKFNKNQNRARFNDDAFNFDSEGKLVVKGQPKPSTNVDDPLSAVTSGINAYLEAVKSGPVRGQRNKLKFRKNGKDSDEFGDDDDGEKDSRLMRGRVNQGNKIGKHNKKGPKFKSRKKL.

2 positions are modified to phosphoserine: S1059 and S1067. A disordered region spans residues 1168-1228; the sequence is GPVRGQRNKL…GPKFKSRKKL (61 aa). Residues 1212–1228 show a composition bias toward basic residues; sequence IGKHNKKGPKFKSRKKL.

Belongs to the RRP12 family. In terms of assembly, interacts with GSP1.

Its subcellular location is the cytoplasm. The protein resides in the nucleus. The protein localises to the nucleolus. In association with GSP1, required for nuclear export of both pre-40S and pre-60S ribosomal subunits. Required for the late maturation of the 18S and 5.8S rRNA of the pre-40S ribosomes and for maturation of the 25S and 5.8S rRNA of the pre-60S ribosomes. This is Ribosomal RNA-processing protein 12 (RRP12) from Saccharomyces cerevisiae (strain ATCC 204508 / S288c) (Baker's yeast).